We begin with the raw amino-acid sequence, 293 residues long: Formamidopyrimidine-DNA glycosylase (293 aa).

Pro2 acts as the Schiff-base intermediate with DNA in catalysis. Glu3 (proton donor) is an active-site residue. The active-site Proton donor; for beta-elimination activity is Lys60. Residues His110, Arg129, and Lys174 each contribute to the DNA site. Residues 259–293 form an FPG-type zinc finger; the sequence is NVYRRTGKKCHACKNLIERQKISGRSTHWCRKCQK. Arg283 functions as the Proton donor; for delta-elimination activity in the catalytic mechanism.

The protein belongs to the FPG family. Monomer. Zn(2+) serves as cofactor.

The enzyme catalyses Hydrolysis of DNA containing ring-opened 7-methylguanine residues, releasing 2,6-diamino-4-hydroxy-5-(N-methyl)formamidopyrimidine.. The catalysed reaction is 2'-deoxyribonucleotide-(2'-deoxyribose 5'-phosphate)-2'-deoxyribonucleotide-DNA = a 3'-end 2'-deoxyribonucleotide-(2,3-dehydro-2,3-deoxyribose 5'-phosphate)-DNA + a 5'-end 5'-phospho-2'-deoxyribonucleoside-DNA + H(+). In terms of biological role, involved in base excision repair of DNA damaged by oxidation or by mutagenic agents. Acts as a DNA glycosylase that recognizes and removes damaged bases. Has a preference for oxidized purines, such as 7,8-dihydro-8-oxoguanine (8-oxoG). Has AP (apurinic/apyrimidinic) lyase activity and introduces nicks in the DNA strand. Cleaves the DNA backbone by beta-delta elimination to generate a single-strand break at the site of the removed base with both 3'- and 5'-phosphates. This chain is Formamidopyrimidine-DNA glycosylase, found in Prochlorococcus marinus (strain MIT 9515).